Consider the following 112-residue polypeptide: Large ribosomal subunit protein uL22 (112 aa).

It belongs to the universal ribosomal protein uL22 family. As to quaternary structure, part of the 50S ribosomal subunit.

Its function is as follows. This protein binds specifically to 23S rRNA; its binding is stimulated by other ribosomal proteins, e.g. L4, L17, and L20. It is important during the early stages of 50S assembly. It makes multiple contacts with different domains of the 23S rRNA in the assembled 50S subunit and ribosome. Functionally, the globular domain of the protein is located near the polypeptide exit tunnel on the outside of the subunit, while an extended beta-hairpin is found that lines the wall of the exit tunnel in the center of the 70S ribosome. The polypeptide is Large ribosomal subunit protein uL22 (Anaplasma marginale (strain Florida)).